The chain runs to 114 residues: uncharacterized protein (114 aa).

2 helical membrane-spanning segments follow: residues 9–29 and 75–95; these read LAIF…SFWL and LVHF…VAII.

Its subcellular location is the cell membrane. This is an uncharacterized protein from Mycoplasma pneumoniae (strain ATCC 29342 / M129 / Subtype 1) (Mycoplasmoides pneumoniae).